Here is a 1936-residue protein sequence, read N- to C-terminus: Trinucleotide repeat-containing gene 6C protein (1936 aa).

Basic and acidic residues predominate over residues 1–31; that stretch reads MEEKKKKKQEEKKKKEGAQKKAADQKTKVPE. Disordered regions lie at residues 1 to 160, 181 to 256, 366 to 412, 439 to 931, 961 to 1063, and 1115 to 1139; these read MEEK…PTYR, PSIT…NSNG, PQES…AMQT, NGSS…IRRK, VIQS…VAFG, and ESTS…KTSG. Residues 34–44 are compositionally biased toward polar residues; sequence KTCSSQPQPAG. Residues 45–57 show a composition bias toward low complexity; sequence TSTSTSTSTISSS. Positions 58 to 71 are enriched in polar residues; sequence NNGKRASASGQQPA. A compositionally biased stretch (basic and acidic residues) spans 76–88; it reads LPREVPPRFRQQE. Polar residues-rich tracts occupy residues 100 to 111 and 183 to 217; these read PTGTLTSVSPTQ and ITGT…GSAQ. Positions 211–1133 are sufficient for interaction with argonaute family proteins; the sequence is MATGSAQGNF…GNAPKKGLQK (923 aa). The span at 218–235 shows a compositional bias: low complexity; that stretch reads GNFTGHTKKTNGNNGTNG. Residues 366–393 are compositionally biased toward polar residues; the sequence is PQESTEPQTSTSQNVSFSAQPQNLNTDG. Composition is skewed to low complexity over residues 394-408, 439-453, and 469-480; these read PNNT…NPIN, NGSS…SAEG, and GNSNSGFSQGNG. Residues 481–498 show a composition bias toward polar residues; it reads DTVNSALSAKQNGSSSAV. Residue Arg523 is modified to Omega-N-methylarginine. Polar residues predominate over residues 572 to 585; it reads GWESPSVTSQNPTV. Low complexity predominate over residues 594 to 614; it reads SWAKAASSGTTASEGSSDGSG. The span at 625 to 636 shows a compositional bias: basic and acidic residues; sequence GTGEGRRRDKGI. Over residues 654–669 the composition is skewed to polar residues; it reads LSNTGWGQTPVKQNTA. Residues 674 to 684 show a composition bias toward basic and acidic residues; that stretch reads ESPRSERKNDN. Ser675 carries the phosphoserine modification. Over residues 694–718 the composition is skewed to polar residues; sequence TQASNSGGKNDGSIMNSTNTSSVSG. Composition is skewed to low complexity over residues 720–730 and 750–772; these read VNAPPAAVPAN and SISS…SGAA. 2 stretches are compositionally biased toward polar residues: residues 834–866 and 873–888; these read NRSG…TNWG and PQQN…NVSN. Ser924 is modified (phosphoserine). Positions 964-982 are enriched in low complexity; it reads SSTTTNTTTTTTTTTSNTT. Thr987 bears the Phosphothreonine mark. A compositionally biased stretch (polar residues) spans 1021 to 1035; the sequence is ENSWGEPSSPSTLVD. In terms of domain architecture, UBA spans 1140–1185; that stretch reads KQDEAWIMSRLIKQLTDMGFPREPAEEALKSNNMNLDQAMSALLEK. Ser1218 carries the phosphoserine modification. 4 disordered regions span residues 1291–1312, 1419–1658, 1689–1732, and 1848–1869; these read AAQA…NSSQ, VKQP…PSSS, STWS…PSST, and TSSW…GSSH. Residues 1388-1419 adopt a coiled-coil conformation; it reads MRQQEQQVARTITNLQQQIQQHQRQLAQALLV. Pro residues predominate over residues 1421-1430; sequence QPPPPPPPPH. The interval 1467 to 1936 is silencing domain; interaction with CNOT1 and PAN3; it reads NTFAPYPLAG…PGDLLSGESL (470 aa). Residues 1496–1515 show a composition bias toward polar residues; that stretch reads DPSQSQSRLPQWTHPNSMDN. Residues 1578 to 1624 are required for interaction with PABPC1; the sequence is KSDSDKISNGSSINWPPEFHPGVPWKGLQNIDPENDPDVTPGSVPTG. A sufficient for translational repression when tethered to a target mRNA region spans residues 1578–1936; sequence KSDSDKISNG…PGDLLSGESL (359 aa). The segment at 1588-1606 is PABPC1-interacting motif-2 (PAM2); sequence SSINWPPEFHPGVPWKGLQ. Residues 1623-1633 are compositionally biased toward polar residues; sequence TGPTINTTIQD. Low complexity predominate over residues 1641-1658; the sequence is SGGSSPPSSQNATLPSSS. Polar residues predominate over residues 1689 to 1703; the sequence is STWSSGPTSHTQASL. Residues 1811-1878 enclose the RRM domain; it reads AQKSLHMCVL…HGLVRSDAGH (68 aa). The segment at 1842 to 1936 is interaction with the CCR4-NOT complex; sequence GQALPPTSSW…PGDLLSGESL (95 aa). Residues 1848–1865 show a composition bias toward low complexity; it reads TSSWQSSSASSQPRLSAA.

Belongs to the GW182 family. In terms of assembly, interacts with one or more of the argonaute family proteins AGO1, AGO2, AGO3 and AGO4. Interacts with PABPC1 and EIF4G1. Interacts with CNOT1; the interaction is direct and mediates the association with the CCR4-NOT complex. Interacts with PAN3; the interaction mediates the association with the PAN complex.

Its function is as follows. Plays a role in RNA-mediated gene silencing by micro-RNAs (miRNAs). Required for miRNA-dependent translational repression of complementary mRNAs by argonaute family proteins. As scaffoldng protein associates with argonaute proteins bound to partially complementary mRNAs and simultaneously can recruit CCR4-NOT and PAN deadenylase complexes. The sequence is that of Trinucleotide repeat-containing gene 6C protein (TNRC6C) from Homo sapiens (Human).